The primary structure comprises 307 residues: Farnesol kinase, chloroplastic (307 aa).

Residues 1–65 (MATTSTTTKL…TKIRKSSLAA (65 aa)) constitute a chloroplast transit peptide. 7 consecutive transmembrane segments (helical) span residues 77 to 97 (VCAFGVTSIVAFSCLGFWGEI), 116 to 136 (IGLVFMLCWPLFSSGIQGALF), 137 to 157 (ASLVPGLNIVRMLLLGLGVYH), 177 to 194 (GPLYYVLSITSACIYYWK), 197 to 217 (PIAIAVICNLCAGDGMADIVG), 237 to 257 (IGMATAGFLASVAYMYYFASF), and 265 to 285 (GMILRFLVISIASALVESLPI).

Belongs to the polyprenol kinase family.

It is found in the plastid. The protein resides in the chloroplast membrane. The catalysed reaction is (2E,6E)-farnesol + CTP = (2E,6E)-farnesyl phosphate + CDP + H(+). The enzyme catalyses (2E,6E)-farnesol + ATP = (2E,6E)-farnesyl phosphate + ADP + H(+). It carries out the reaction (2E)-geraniol + ATP = (2E)-geranyl phosphate + ADP + H(+). It catalyses the reaction (2E,6E,10E)-geranylgeraniol + ATP = (2E,6E,10E)-geranylgeranyl phosphate + ADP + H(+). In terms of biological role, kinase involved in negative regulation of abscisic acid (ABA) signaling. Substrate preference is farnesol &gt; geraniol &gt; geranylgeraniol, but has no activity with farnesyl phosphate. Can use CTP &gt; ATP &gt; GTP = UTP as phosphoryl donor. This Arabidopsis thaliana (Mouse-ear cress) protein is Farnesol kinase, chloroplastic.